Reading from the N-terminus, the 1336-residue chain is pre-mRNA 3' end processing protein WDR33 (1336 aa).

At Ala2 the chain carries N-acetylalanine. A Phosphoserine modification is found at Ser7. An N6-acetyllysine modification is found at Lys46. WD repeat units lie at residues 117–156 (KVKCPVFVVRWTPEGRRLVTGASSGEFTLWNGLTFNFETI), 159–198 (AHDSPVRAMTWSHNDMWMLTADHGGYVKYWQSNMNNVKMF), 200–239 (AHKEAIREASFSPTDNKFATCSDDGTVRIWDFLRCHEERI), 242–283 (GHGA…SLAT), 286–325 (AHKNTVMEVKLNLNGNWLLTASRDHLCKLFDIRNLKEELQ), 329–369 (GHKK…EVGG), and 373–412 (AHEGMIWSLAWHPLGHILCSGSNDHTSKFWTRNRPGDKMR). Residues Lys526, Lys530, and Lys560 each participate in a glycyl lysine isopeptide (Lys-Gly) (interchain with G-Cter in SUMO2) cross-link. Residues 568 to 1336 (QVEQIQPPPS…GASRGGGRGR (769 aa)) form a disordered region. Pro residues predominate over residues 573–590 (QPPPSSGTPLLGPQPFPG). The span at 594–607 (MSQIPQGFQQPHPS) shows a compositional bias: polar residues. The segment covering 608 to 643 (QQMPMNMAQMGPPGPQGQFRPPGPQGQMGPQGPPLH) has biased composition (low complexity). Residues 618 to 770 (GPPGPQGQFR…GPGSQGIQGP (153 aa)) enclose the Collagen-like domain. The span at 683-695 (PHGPLGPQGPPGP) shows a compositional bias: pro residues. Composition is skewed to low complexity over residues 696–707 (QGSSGPQGHMGP) and 726–751 (QGHLGPQGPPGTQGMQGPPGPRGMQG). Arg782 carries the omega-N-methylarginine modification. Residues 854 to 869 (GPPGSQSQQGPPQGSL) are compositionally biased toward low complexity. Arg915 is subject to Asymmetric dimethylarginine. Over residues 932–941 (PGLGQQGAQG) the composition is skewed to low complexity. Basic and acidic residues-rich tracts occupy residues 971–989 (SERRHEQSGGPEHGPERGP) and 998–1034 (GPPDRRGPHPDFPDDFSRPDDFHPDKRFGHRLREFEG). Arg987 carries the post-translational modification Omega-N-methylarginine. Omega-N-methylarginine is present on Arg1035. 2 stretches are compositionally biased toward basic and acidic residues: residues 1056-1068 (PDHREFSEGDGRG) and 1078-1122 (EGRR…RGRD). Residues 1130–1140 (FGPEENFDASE) are compositionally biased toward acidic residues. The span at 1141 to 1150 (EAARGRDLRG) shows a compositional bias: basic and acidic residues. The span at 1151–1160 (RGRGTPRGGR) shows a compositional bias: basic residues. Basic and acidic residues-rich tracts occupy residues 1169–1217 (EFPR…RERS) and 1242–1259 (SEHREMEAPGGPSEDRGG). A Phosphoserine modification is found at Ser1210. Arg1262 bears the Omega-N-methylarginine mark. Residues 1281–1293 (DGEHHDGYHRDEP) show a composition bias toward basic and acidic residues. The segment covering 1301 to 1326 (GTPSRGGRSGSNWGRGSNMNSGPPRR) has biased composition (low complexity). Arg1315 is subject to Asymmetric dimethylarginine; alternate. Arg1315 bears the Omega-N-methylarginine; alternate mark.

It belongs to the WD repeat WDR33 family. In terms of assembly, component of the cleavage and polyadenylation specificity factor (CPSF) module of the pre-mRNA 3'-end processing complex. Interacts with CPSF3/CPSF73. As to expression, most highly expressed in testis.

Its subcellular location is the nucleus. Essential for both cleavage and polyadenylation of pre-mRNA 3' ends. The chain is pre-mRNA 3' end processing protein WDR33 (WDR33) from Homo sapiens (Human).